A 357-amino-acid polypeptide reads, in one-letter code: Phospho-N-acetylmuramoyl-pentapeptide-transferase (357 aa).

The next 10 membrane-spanning stretches (helical) occupy residues Gln-4 to Ile-24, Thr-52 to Ile-72, Pro-77 to Leu-97, Ala-115 to Ala-135, Phe-153 to Met-173, Leu-186 to Phe-206, Pro-228 to Trp-248, Ile-255 to Cys-275, Leu-280 to Val-300, and Phe-334 to Ala-354.

It belongs to the glycosyltransferase 4 family. MraY subfamily. Requires Mg(2+) as cofactor.

Its subcellular location is the cell membrane. The catalysed reaction is UDP-N-acetyl-alpha-D-muramoyl-L-alanyl-gamma-D-glutamyl-meso-2,6-diaminopimeloyl-D-alanyl-D-alanine + di-trans,octa-cis-undecaprenyl phosphate = di-trans,octa-cis-undecaprenyl diphospho-N-acetyl-alpha-D-muramoyl-L-alanyl-D-glutamyl-meso-2,6-diaminopimeloyl-D-alanyl-D-alanine + UMP. Its pathway is cell wall biogenesis; peptidoglycan biosynthesis. Its function is as follows. Catalyzes the initial step of the lipid cycle reactions in the biosynthesis of the cell wall peptidoglycan: transfers peptidoglycan precursor phospho-MurNAc-pentapeptide from UDP-MurNAc-pentapeptide onto the lipid carrier undecaprenyl phosphate, yielding undecaprenyl-pyrophosphoryl-MurNAc-pentapeptide, known as lipid I. This Streptomyces avermitilis (strain ATCC 31267 / DSM 46492 / JCM 5070 / NBRC 14893 / NCIMB 12804 / NRRL 8165 / MA-4680) protein is Phospho-N-acetylmuramoyl-pentapeptide-transferase.